Reading from the N-terminus, the 1238-residue chain is Multifunctional 2-oxoglutarate metabolism enzyme (1238 aa).

The tract at residues M1–N41 is 2-oxoglutarate dehydrogenase E1, N-terminal part. Positions P42 to A97 are linker. A disordered region spans residues S44 to I108. Residues Q59 to P107 are compositionally biased toward low complexity. The succinyltransferase E2 stretch occupies residues A98–S346. The active-site Proton acceptor; for succinyltransferase activity is the H325. The interval D347–G1238 is 2-oxoglutarate dehydrogenase E1, C-terminal part. R551 is a thiamine diphosphate binding site. 2 residues coordinate 2-oxoglutarate: H590 and S615. Thiamine diphosphate is bound by residues S615, L617, D657, A658, A659, and N690. D657 serves as a coordination point for Mg(2+). N690 and I692 together coordinate Mg(2+). Residues D795–H825 adopt a coiled-coil conformation. H1032 lines the 2-oxoglutarate pocket. 7 residues coordinate acetyl-CoA: T1050, R1066, K1101, S1104, Q1154, R1161, and R1162.

The protein belongs to the 2-oxoacid dehydrogenase family. Kgd subfamily. Homodimer. The 2-oxoglutarate dehydrogenase (ODH) complex contains multiple copies of three enzymatic components: 2-oxoglutarate dehydrogenase (E1), dihydrolipoamide succinyltransferase (E2) and lipoamide dehydrogenase (E3). The cofactor is Mg(2+). Requires thiamine diphosphate as cofactor.

It catalyses the reaction glyoxylate + 2-oxoglutarate + H(+) = 2-hydroxy-3-oxoadipate + CO2. It carries out the reaction 2-oxoglutarate + H(+) = succinate semialdehyde + CO2. The enzyme catalyses N(6)-[(R)-lipoyl]-L-lysyl-[protein] + 2-oxoglutarate + H(+) = N(6)-[(R)-S(8)-succinyldihydrolipoyl]-L-lysyl-[protein] + CO2. The catalysed reaction is N(6)-[(R)-dihydrolipoyl]-L-lysyl-[protein] + succinyl-CoA = N(6)-[(R)-S(8)-succinyldihydrolipoyl]-L-lysyl-[protein] + CoA. It functions in the pathway carbohydrate metabolism; tricarboxylic acid cycle; succinate from 2-oxoglutarate (transferase route): step 1/2. It participates in carbohydrate metabolism; tricarboxylic acid cycle; succinyl-CoA from 2-oxoglutarate (dehydrogenase route): step 1/1. With respect to regulation, alpha-ketoglutarate dehydrogenase and decarboxylase activities are inhibited by unphosphorylated GarA, and allosterically activated by acetyl-CoA, the main substrate of the TCA cycle. Functionally, shows three enzymatic activities that share a first common step, the attack of thiamine-PP on 2-oxoglutarate (alpha-ketoglutarate, KG), leading to the formation of an enamine-thiamine-PP intermediate upon decarboxylation. Thus, displays KGD activity, catalyzing the decarboxylation from five-carbon 2-oxoglutarate to four-carbon succinate semialdehyde (SSA). Also catalyzes C-C bond formation between the activated aldehyde formed after decarboxylation of alpha-ketoglutarate and the carbonyl of glyoxylate (GLX), to yield 2-hydroxy-3-oxoadipate (HOA), which spontaneously decarboxylates to form 5-hydroxylevulinate (HLA). And is also a component of the 2-oxoglutarate dehydrogenase (ODH) complex, that catalyzes the overall conversion of 2-oxoglutarate to succinyl-CoA and CO(2). The KG decarboxylase and KG dehydrogenase reactions provide two alternative, tightly regulated, pathways connecting the oxidative and reductive branches of the TCA cycle. In Mycobacterium leprae (strain TN), this protein is Multifunctional 2-oxoglutarate metabolism enzyme (kgd).